A 292-amino-acid polypeptide reads, in one-letter code: Phosphatidylglycerol--prolipoprotein diacylglyceryl transferase (292 aa).

The next 7 membrane-spanning stretches (helical) occupy residues 25 to 45, 70 to 90, 102 to 122, 138 to 158, 193 to 213, 217 to 237, and 255 to 275; these read ITLH…WWYA, FVVW…VLVW, IIAV…IIIA, FDII…CNFI, FMEG…FKAF, GTVS…SEVY, and GFTY…YLLL. Arginine 153 provides a ligand contact to a 1,2-diacyl-sn-glycero-3-phospho-(1'-sn-glycerol).

The protein belongs to the Lgt family.

It is found in the cell inner membrane. The catalysed reaction is L-cysteinyl-[prolipoprotein] + a 1,2-diacyl-sn-glycero-3-phospho-(1'-sn-glycerol) = an S-1,2-diacyl-sn-glyceryl-L-cysteinyl-[prolipoprotein] + sn-glycerol 1-phosphate + H(+). The protein operates within protein modification; lipoprotein biosynthesis (diacylglyceryl transfer). Its function is as follows. Catalyzes the transfer of the diacylglyceryl group from phosphatidylglycerol to the sulfhydryl group of the N-terminal cysteine of a prolipoprotein, the first step in the formation of mature lipoproteins. The protein is Phosphatidylglycerol--prolipoprotein diacylglyceryl transferase of Bartonella tribocorum (strain CIP 105476 / IBS 506).